The primary structure comprises 157 residues: CASP-like protein 1 (157 aa).

At 1–13 (MKTEARDGGSEWR) the chain is on the cytoplasmic side. Residues 14 to 34 (WVAIFELFLRLAAIVSTSVAV) traverse the membrane as a helical segment. Topologically, residues 35-40 (YAAMGK) are extracellular. The helical transmembrane segment at 41–61 (IFVVAVNGVACFYLLMSLPVS) threads the bilayer. Topologically, residues 62 to 82 (IFNIMRPHAYPANRVFLNIMD) are cytoplasmic. The helical transmembrane segment at 83–103 (MVMVALVTAGALAAGIVYLVE) threads the bilayer. The Extracellular portion of the chain corresponds to 104–121 (KAGNARASWVSVWSQFDS). The chain crosses the membrane as a helical span at residues 122–142 (SSCFAVLALILHVLLSGVILY). At 143–157 (KQALNIKFKKLDSVD) the chain is on the cytoplasmic side.

The protein belongs to the Casparian strip membrane proteins (CASP) family. Homodimer and heterodimers.

Its subcellular location is the cell membrane. The protein is CASP-like protein 1 of Picea sitchensis (Sitka spruce).